Consider the following 499-residue polypeptide: Protein NODULATION SIGNALING PATHWAY 2 (499 aa).

Residues 64–106 (NNTGPAFSDHTASTTSEEEEEEEATTTTMTTTTTTTTTTPEAA) are disordered. The span at 88-104 (TTTTMTTTTTTTTTTPE) shows a compositional bias: low complexity. Residues 106–491 (ADDDFKGLRL…RRLLSASLWT (386 aa)) form the GRAS domain. Positions 113-182 (LRLVHLLMAG…AGGAYNSSSK (70 aa)) are leucine repeat I (LRI). Residues 201–265 (FQLLQDMSPY…PNGPHLRITA (65 aa)) form a VHIID region. Residues 232 to 236 (VHIVD) carry the VHIID motif. The interval 281-313 (ETGRRLTAFATSLGQPFSFHHSRLESDETFRPA) is leucine repeat II (LRII). Residues 323-414 (LVFNCMLNLP…RVFLGPRIVG (92 aa)) are PFYRE. The interval 417–491 (ARIYRTGGGG…RRLLSASLWT (75 aa)) is SAW.

It belongs to the GRAS family. In terms of assembly, interacts with IPN2. Binds to RAD1. Interacts with RAM1. As to expression, highly expressed in roots.

The protein resides in the nucleus membrane. Its subcellular location is the endoplasmic reticulum. Functionally, transcriptional regulator essential for Nod-factor-induced gene expression. Acts downstream of calcium spiking and a calcium/calmodulin-dependent protein kinase required for activation of early nodulation gene expression. Transcription factor involved in the induction of NIN and ENOD40 genes, which are required for rhizobial infection and early nodule development. Does not seem to contribute to the early steps of the arbuscular mycorrhizal fungus infection and colonization processes in roots. Transcription factor involved in the positive regulation of the beta-carotene isomerase D27, which participates in a pathway leading to biosynthesis of strigolactones in roots. In Lotus japonicus (Lotus corniculatus var. japonicus), this protein is Protein NODULATION SIGNALING PATHWAY 2.